The primary structure comprises 288 residues: tRNA (guanine-N(1)-)-methyltransferase (288 aa).

The tract at residues 82–105 is disordered; the sequence is ATDAVDTSDPGDSAAPDSSAPSGA. Residues 89–105 are compositionally biased toward low complexity; the sequence is SDPGDSAAPDSSAPSGA. Residues glycine 137 and 162 to 167 each bind S-adenosyl-L-methionine; that span reads IGDYVL.

It belongs to the RNA methyltransferase TrmD family. As to quaternary structure, homodimer.

Its subcellular location is the cytoplasm. The catalysed reaction is guanosine(37) in tRNA + S-adenosyl-L-methionine = N(1)-methylguanosine(37) in tRNA + S-adenosyl-L-homocysteine + H(+). Its function is as follows. Specifically methylates guanosine-37 in various tRNAs. This chain is tRNA (guanine-N(1)-)-methyltransferase, found in Bifidobacterium longum (strain DJO10A).